The sequence spans 158 residues: Cyclic pyranopterin monophosphate synthase (158 aa).

Residues 76-78 (LCH) and 114-115 (ME) each bind substrate. Aspartate 129 is an active-site residue.

The protein belongs to the MoaC family. Homohexamer; trimer of dimers.

It catalyses the reaction (8S)-3',8-cyclo-7,8-dihydroguanosine 5'-triphosphate = cyclic pyranopterin phosphate + diphosphate. It participates in cofactor biosynthesis; molybdopterin biosynthesis. Functionally, catalyzes the conversion of (8S)-3',8-cyclo-7,8-dihydroguanosine 5'-triphosphate to cyclic pyranopterin monophosphate (cPMP). The polypeptide is Cyclic pyranopterin monophosphate synthase (Shewanella piezotolerans (strain WP3 / JCM 13877)).